Consider the following 483-residue polypeptide: V-type proton ATPase subunit H (483 aa).

Ser483 carries the post-translational modification Phosphoserine.

Belongs to the V-ATPase H subunit family. V-ATPase is a heteromultimeric enzyme made up of two complexes: the ATP-hydrolytic V1 complex and the proton translocation V0 complex. The V1 complex consists of three catalytic AB heterodimers that form a heterohexamer, three peripheral stalks each consisting of EG heterodimers, one central rotor including subunits D and F, and the regulatory subunits C and H. The proton translocation complex V0 consists of the proton transport subunit a, a ring of proteolipid subunits c9c'', rotary subunit d, subunits e and f, and the accessory subunits ATP6AP1/Ac45 and ATP6AP2/PRR. Interacts with AP2M1. In terms of tissue distribution, expressed in brain (at protein level).

The protein localises to the cytoplasmic vesicle. The protein resides in the clathrin-coated vesicle membrane. Its function is as follows. Subunit of the V1 complex of vacuolar(H+)-ATPase (V-ATPase), a multisubunit enzyme composed of a peripheral complex (V1) that hydrolyzes ATP and a membrane integral complex (V0) that translocates protons. V-ATPase is responsible for acidifying and maintaining the pH of intracellular compartments and in some cell types, is targeted to the plasma membrane, where it is responsible for acidifying the extracellular environment. Subunit H is essential for V-ATPase activity, but not for the assembly of the complex. Involved in the endocytosis mediated by clathrin-coated pits, required for the formation of endosomes. The protein is V-type proton ATPase subunit H (ATP6V1H) of Bos taurus (Bovine).